Here is a 159-residue protein sequence, read N- to C-terminus: SsrA-binding protein (159 aa).

Belongs to the SmpB family.

It is found in the cytoplasm. Its function is as follows. Required for rescue of stalled ribosomes mediated by trans-translation. Binds to transfer-messenger RNA (tmRNA), required for stable association of tmRNA with ribosomes. tmRNA and SmpB together mimic tRNA shape, replacing the anticodon stem-loop with SmpB. tmRNA is encoded by the ssrA gene; the 2 termini fold to resemble tRNA(Ala) and it encodes a 'tag peptide', a short internal open reading frame. During trans-translation Ala-aminoacylated tmRNA acts like a tRNA, entering the A-site of stalled ribosomes, displacing the stalled mRNA. The ribosome then switches to translate the ORF on the tmRNA; the nascent peptide is terminated with the 'tag peptide' encoded by the tmRNA and targeted for degradation. The ribosome is freed to recommence translation, which seems to be the essential function of trans-translation. This Coxiella burnetii (strain RSA 331 / Henzerling II) protein is SsrA-binding protein.